We begin with the raw amino-acid sequence, 626 residues long: ABC transporter G family member 8 (626 aa).

The 245-residue stretch at 56-300 folds into the ABC transporter domain; sequence VNLDNKTENS…SLGYPCPNNT (245 aa). 90 to 97 lines the ATP pocket; it reads GPSGSGKS. Residues 373–621 enclose the ABC transmembrane type-2 domain; it reads GNALSRVITA…SLSYFALHFL (249 aa). Helical transmembrane passes span 376–396, 409–429, 447–467, 485–505, 515–535, 543–563, and 600–620; these read LSRV…FAGL, TLFF…TLFL, FPYF…VTLV, FFFA…FISS, LTFS…GFYV, AFGW…VVIN, and FGVL…ALHF.

Belongs to the ABC transporter superfamily. ABCG family. Eye pigment precursor importer (TC 3.A.1.204) subfamily.

The protein resides in the membrane. This is ABC transporter G family member 8 (abcG8) from Dictyostelium discoideum (Social amoeba).